A 20-amino-acid polypeptide reads, in one-letter code: Putative antimicrobial protein 2 (20 aa).

The segment at 1-20 (DLPECCSATELELDSGKQTS) is disordered.

Its function is as follows. May have antimicrobial activity. This is Putative antimicrobial protein 2 from Cenchritis muricatus (Beaded periwinkle).